The sequence spans 310 residues: Aspartate carbamoyltransferase catalytic subunit (310 aa).

Residues R54 and T55 each contribute to the carbamoyl phosphate site. K84 contributes to the L-aspartate binding site. Residues R105, H134, and Q137 each coordinate carbamoyl phosphate. L-aspartate is bound by residues R167 and R229. Carbamoyl phosphate is bound by residues L267 and P268.

Belongs to the aspartate/ornithine carbamoyltransferase superfamily. ATCase family. As to quaternary structure, heterododecamer (2C3:3R2) of six catalytic PyrB chains organized as two trimers (C3), and six regulatory PyrI chains organized as three dimers (R2).

The enzyme catalyses carbamoyl phosphate + L-aspartate = N-carbamoyl-L-aspartate + phosphate + H(+). It functions in the pathway pyrimidine metabolism; UMP biosynthesis via de novo pathway; (S)-dihydroorotate from bicarbonate: step 2/3. Functionally, catalyzes the condensation of carbamoyl phosphate and aspartate to form carbamoyl aspartate and inorganic phosphate, the committed step in the de novo pyrimidine nucleotide biosynthesis pathway. The chain is Aspartate carbamoyltransferase catalytic subunit from Enterobacter sp. (strain 638).